The following is a 380-amino-acid chain: Erythronate-4-phosphate dehydrogenase (380 aa).

2 residues coordinate substrate: S45 and T66. NAD(+) contacts are provided by residues 126–127 (QV), D146, T174, 205–207 (ASR), and D231. Residue R207 is part of the active site. E236 is an active-site residue. Residue H253 is the Proton donor of the active site. G256 is an NAD(+) binding site. Substrate is bound at residue Y257.

The protein belongs to the D-isomer specific 2-hydroxyacid dehydrogenase family. PdxB subfamily. As to quaternary structure, homodimer.

It localises to the cytoplasm. It carries out the reaction 4-phospho-D-erythronate + NAD(+) = (R)-3-hydroxy-2-oxo-4-phosphooxybutanoate + NADH + H(+). The protein operates within cofactor biosynthesis; pyridoxine 5'-phosphate biosynthesis; pyridoxine 5'-phosphate from D-erythrose 4-phosphate: step 2/5. Functionally, catalyzes the oxidation of erythronate-4-phosphate to 3-hydroxy-2-oxo-4-phosphonooxybutanoate. This chain is Erythronate-4-phosphate dehydrogenase, found in Azotobacter vinelandii (strain DJ / ATCC BAA-1303).